Consider the following 61-residue polypeptide: uncharacterized protein (61 aa).

This is an uncharacterized protein from Methanocaldococcus jannaschii (strain ATCC 43067 / DSM 2661 / JAL-1 / JCM 10045 / NBRC 100440) (Methanococcus jannaschii).